The primary structure comprises 412 residues: Branched-chain alpha-ketoacid dehydrogenase kinase (412 aa).

The N-terminal 30 residues, 1–30, are a transit peptide targeting the mitochondrion; it reads MILTSVLGSGPRSGSSLWPLLGSSLSLRVR. At serine 31 the chain carries Phosphoserine. A Histidine kinase domain is found at 159–404; the sequence is LDDHKDVVTL…DVYLRLRHID (246 aa). N6-acetyllysine occurs at positions 192 and 233. Positions 279 and 315 each coordinate ATP. Position 279 (asparagine 279) interacts with Mg(2+). K(+) is bound by residues valine 328, aspartate 330, and phenylalanine 333. Residues threonine 334 and threonine 335 each coordinate ATP. Serine 356 and serine 360 each carry phosphoserine. ATP contacts are provided by histidine 364, glycine 367, and leucine 370. A K(+)-binding site is contributed by glycine 367.

Belongs to the PDK/BCKDK protein kinase family. As to quaternary structure, homodimer. Homotetramer. Dimerizes through interaction of two opposing nucleotide-binding domains. Interacts with E2 component of the branched-chain alpha-ketoacid dehydrogenase (BCKDH) complex. Competes with BCKDK for binding to the E2 component; this interaction is modulated by branched-chain alpha-keto acids. At steady state, BCKDH holoenzyme contains BCKDK and BCKDHA is phosphorylated. In response to high levels of branched-chain alpha-keto acids, the inhibitory BCKDK is replaced by activating PPM1K leading to BCKDHA dephosphorylation and BCAA degradation. Post-translationally, autophosphorylated. As to expression, expressed in heart and liver.

Its subcellular location is the mitochondrion matrix. It is found in the mitochondrion. It catalyses the reaction L-seryl-[3-methyl-2-oxobutanoate dehydrogenase] + ATP = O-phospho-L-seryl-[3-methyl-2-oxobutanoate dehydrogenase] + ADP + H(+). It carries out the reaction L-seryl-[protein] + ATP = O-phospho-L-seryl-[protein] + ADP + H(+). The ATP-ase activity is up-regulated by potassium and rubidium ions but not by sodium ions. Up-regulated in the presence of apo- or lipoylated-DBT/E2b subunit of the BCKDH complex. In terms of biological role, serine/threonine-protein kinase component of macronutrients metabolism. Forms a functional kinase and phosphatase pair with PPM1K, serving as a metabolic regulatory node that coordinates branched-chain amino acids (BCAAs) with glucose and lipid metabolism via two distinct phosphoprotein targets: mitochondrial BCKDHA subunit of the branched-chain alpha-ketoacid dehydrogenase (BCKDH) complex and cytosolic ACLY, a lipogenic enzyme of Krebs cycle. Phosphorylates and inactivates mitochondrial BCKDH complex a multisubunit complex consisting of three multimeric components each involved in different steps of BCAA catabolism: E1 composed of BCKDHA and BCKDHB, E2 core composed of DBT monomers, and E3 composed of DLD monomers. Associates with the E2 component of BCKDH complex and phosphorylates BCKDHA on Ser-333, leading to conformational changes that interrupt substrate channeling between E1 and E2 and inactivates the BCKDH complex. phosphorylates ACLY on Ser-455 in response to changes in cellular carbohydrate abundance such as occurs during fasting to feeding metabolic transition. Refeeding stimulates MLXIPL/ChREBP transcription factor, leading to increased BCKDK to PPM1K expression ratio, phosphorylation and activation of ACLY that ultimately results in the generation of malonyl-CoA and oxaloacetate immediate substrates of de novo lipogenesis and glucogenesis, respectively. Recognizes phosphosites having SxxE/D canonical motif. In Rattus norvegicus (Rat), this protein is Branched-chain alpha-ketoacid dehydrogenase kinase (Bckdk).